The chain runs to 128 residues: MTTTPETQKTAVAHGNYVRGSASKVRRVLDQIRGRSYRDALIMLEFMPYRSTDPITKVLRSAVANAEHNLGMDPSTLVISSAWANSGPVMKRYRPRAQGRAFSIKKQTCHISISVESAPTQTNAEVQN.

This sequence belongs to the universal ribosomal protein uL22 family. As to quaternary structure, part of the 50S ribosomal subunit.

In terms of biological role, this protein binds specifically to 23S rRNA; its binding is stimulated by other ribosomal proteins, e.g. L4, L17, and L20. It is important during the early stages of 50S assembly. It makes multiple contacts with different domains of the 23S rRNA in the assembled 50S subunit and ribosome. Functionally, the globular domain of the protein is located near the polypeptide exit tunnel on the outside of the subunit, while an extended beta-hairpin is found that lines the wall of the exit tunnel in the center of the 70S ribosome. The sequence is that of Large ribosomal subunit protein uL22 from Prochlorococcus marinus (strain MIT 9301).